A 435-amino-acid chain; its full sequence is Nucleosome assembly protein 1 (435 aa).

Residues 1–51 (MTEQPINTKKKNGDISKAPTPQNTPASVTNSYMRSKPPTVSTIQESNNEDG) are disordered. Ser16 is subject to Phosphoserine. Positions 19–50 (PTPQNTPASVTNSYMRSKPPTVSTIQESNNED) are enriched in polar residues. A phosphothreonine mark is found at Thr20 and Thr24. Ser27 bears the Phosphoserine mark. Phosphothreonine is present on Thr29. A phosphoserine mark is found at Ser31 and Ser35. Thr42 bears the Phosphothreonine mark. Position 46 is a phosphoserine (Ser46). The residue at position 52 (Thr52) is a Phosphothreonine. 2 stretches are compositionally biased toward acidic residues: residues 146-185 (PTVE…EDEQ) and 338-355 (EAND…DEEL). Disordered stretches follow at residues 146-187 (PTVE…EQGI) and 308-435 (ESFF…CKQQ). Residues 356 to 374 (EARLELDYQLGEEIKDRLI) show a composition bias toward basic and acidic residues. The segment covering 386–421 (VDFDYPELEGEGDEDEYSDEDGEGDSDDDDDDDDEA) has biased composition (acidic residues).

The protein belongs to the nucleosome assembly protein (NAP) family. In terms of assembly, component of the GIN4 complex which forms a ring at the bud neck. Post-translationally, phosphorylation is cell cycle dependent and is important for its bud neck localization. Phosphorylation is highest in newly collected G1 cells, declines when the cells are traversing through the G1 phase, and reaches the lowest level around the time of bud emergence. Phosphorylation increases and remains high through the rest of the cell cycle until the beginning of the next one, when it decreases again. Phosphorylation involves two septin ring-associated kinases, CLA4 and GIN4, and its dephosphorylation occurs at the septin ring in a manner dependent on the phosphatases PP2A and CDC14.

The protein localises to the bud neck. It is found in the bud tip. In terms of biological role, acidic protein, which assembles histones into an octamer. Involved in the regulation of the localization and the function of the septins during mitosis. The polypeptide is Nucleosome assembly protein 1 (NAP1) (Candida albicans (strain SC5314 / ATCC MYA-2876) (Yeast)).